The primary structure comprises 524 residues: MEPFLLLLLVLLPAIVLVRYAFTYGHRTSTMPIGPPTLPFIGNIHQITKKYTHIKFTEWAAQYGGLYMLKIGNGNMAVITDRRLVKEVLDRKSGIYSHRPHSFVSHDLITKGNHLLVMHYGDQWRTFRRLVHQHLMETMVENHHTKIVNAEAIQLVRDYMIDPEHHMAHPKRYSNSITNSIVFGIRTANREGANMRRLYKLMEEWSEVMETGATPPVDLFPWLKLLPQWLFNNYIDRAKAIGVQMETLYVDILNKVIKRREDGHNNGTFMDKVLDSQEKHNLPWHQLAFIGGVLMEGGSDTSSSLTLAIVQALIQNPDVQRKAHAEIDAVVGHNRSPVWEDFEKLPYINMIIKEGHRWRPILPLCFPHALGEDDWVDGKFLPKGTIVVVNTWGMHMDPSQPDDPAAFIPERFAKHPQLAPDYVPGTWERRDHYGYGVGRRICPGIHLAERNMFLGIAKLLWAFDFQPGEGPIDSDPVTGYHNGFLYCAKDYSCRPVIRNEVIRDTIEREYATATADVFSRFTEG.

Over 1 to 4 the chain is Cytoplasmic; the sequence is MEPF. A helical membrane pass occupies residues 5 to 22; the sequence is LLLLLVLLPAIVLVRYAF. At 23–524 the chain is on the lumenal side; sequence TYGHRTSTMP…ADVFSRFTEG (502 aa). An N-linked (GlcNAc...) asparagine glycan is attached at Asn266. Cys442 contacts heme.

This sequence belongs to the cytochrome P450 family. Heme serves as cofactor.

It localises to the endoplasmic reticulum membrane. It carries out the reaction 3-methylphenol + reduced [NADPH--hemoprotein reductase] + O2 = 3-hydroxybenzyl alcohol + oxidized [NADPH--hemoprotein reductase] + H2O + H(+). Its pathway is mycotoxin biosynthesis; patulin biosynthesis. In terms of biological role, cytochrome P450 monooxygenase; part of the gene cluster that mediates the biosynthesis of patulin, an acetate-derived tetraketide mycotoxin produced by several fungal species that shows antimicrobial properties against several bacteria. PatH catalyzes the conversion of m-cresol into m-hydroxybenzyl alcohol. The pathway begins with the synthesis of 6-methylsalicylic acid by the polyketide synthase (PKS) patK via condensation of acetate and malonate units. The 6-methylsalicylic acid decarboxylase patG then catalyzes the decarboxylation of 6-methylsalicylic acid to yield m-cresol (also known as 3-methylphenol). These first reactions occur in the cytosol. The intermediate m-cresol is then transported into the endoplasmic reticulum where the cytochrome P450 monooxygenase patH converts it to m-hydroxybenzyl alcohol, which is further converted to gentisyl alcohol by the cytochrome P450 monooxygenase patI. The oxidoreductases patJ and patO further convert gentisyl alcohol to isoepoxydon in the vacuole. PatN catalyzes then the transformation of isoepoxydon into phyllostine. The cluster protein patF is responsible for the conversion from phyllostine to neopatulin whereas the alcohol dehydrogenase patD converts neopatulin to E-ascladiol. The steps between isoepoxydon and E-ascladiol occur in the cytosol, and E-ascladiol is probably secreted to the extracellular space by one of the cluster-specific transporters patC or patM. Finally, the secreted patulin synthase patE catalyzes the conversion of E-ascladiol to patulin. The chain is Cytochrome P450 monooxygenase patH from Penicillium expansum (Blue mold rot fungus).